Here is a 74-residue protein sequence, read N- to C-terminus: uncharacterized protein (74 aa).

A helical transmembrane segment spans residues 52-72; that stretch reads ITFGFTVLGLGIGMIFGDAGL.

The protein localises to the membrane. This is an uncharacterized protein from Methanocaldococcus jannaschii (strain ATCC 43067 / DSM 2661 / JAL-1 / JCM 10045 / NBRC 100440) (Methanococcus jannaschii).